The primary structure comprises 407 residues: MKFLFSVILVIISFLGISKIVNGQIACPSPFLYRATNDTVGDYDLGYQYINIGKPLPPQLSFLNNCLMPCQSSFFEQDSWNSFNKLVKQMGAVAFTCSAIIMIIYGPLMNRSFFKFDRHTITVFCFALSTFFIGVSDLMFATNDVDMVCPESHRYARQTDKTCATNGVLFQFGWLGSVMWFAFLSIDGFFRASGKKMNKIAFAIVLASIWILNIVLSFAPMGGDQYGAYFVGQVNCWILVKNWQYAFFWAELIVSLAIGFVGICLTIYSLIRKTSDGNTLKHVTPLILVFLLFCQYLYMIIFYGIINEKKDHYQNILAEQVGCIFNNALAKMKVPGIVYAGECTFNETITFSSQYAFLFFVRLLGIEIFAFYLFSKETLLLIKSSYIATMFGLGDKDAYDVELEETD.

The first 23 residues, M1–G23, serve as a signal peptide directing secretion. Residues Q24–Q89 lie on the Extracellular side of the membrane. N37 carries N-linked (GlcNAc...) asparagine glycosylation. The helical transmembrane segment at M90–N110 threads the bilayer. The Cytoplasmic portion of the chain corresponds to R111 to T120. The helical transmembrane segment at I121–A141 threads the bilayer. Residues T142–L169 are Extracellular-facing. Residues F170–F190 form a helical membrane-spanning segment. The Cytoplasmic portion of the chain corresponds to R191–K199. A helical transmembrane segment spans residues I200–P220. The Extracellular portion of the chain corresponds to M221–A246. A helical membrane pass occupies residues F247–I267. At Y268–P285 the chain is on the cytoplasmic side. A helical transmembrane segment spans residues L286–I306. Residues N307–Q354 are Extracellular-facing. The N-linked (GlcNAc...) asparagine glycan is linked to N346. The chain crosses the membrane as a helical span at residues Y355 to S375. Over K376–D407 the chain is Cytoplasmic.

This sequence belongs to the G-protein coupled receptor Fz/Smo family.

It is found in the membrane. In Dictyostelium discoideum (Social amoeba), this protein is Frizzled/smoothened-like sans CRD protein J (fscJ).